The primary structure comprises 205 residues: MQAPPSFYEGDTLEVAKKLLGQKLVHIVDGIKRSGIIVEVEAYKGPDDKAAHSYGGRRTDRTEVMFGAPGHAYVYLIYGMYHCFNVITAPVGTPQGVLIRALEPVDGIEEIKLARYNKTDITKAQYKNLTNGPGKLCRALGITLEERGVSLQSDTLHIELVREEEHISSQYKITAGPRINIDYAEEAVHYPWRFYYEGHPFVSKK.

Belongs to the DNA glycosylase MPG family.

In Bacillus cereus (strain ATCC 10987 / NRS 248), this protein is Putative 3-methyladenine DNA glycosylase.